Here is a 1547-residue protein sequence, read N- to C-terminus: Fatty acid synthase subunit alpha (1547 aa).

The interval 94-121 (TLPEAHPPPPIDSHQEPSTQTQATHRSA) is disordered. The span at 109–118 (EPSTQTQATH) shows a compositional bias: polar residues. Positions 145–221 (LPVSTIVRSL…ETMSIGHNGR (77 aa)) constitute a Carrier domain. Ser-180 carries the post-translational modification O-(pantetheine 4'-phosphoryl)serine. The interval 563–798 (GKNVLITGAG…ATLMGGTITT (236 aa)) is ketoreductase (KR) domain. Positions 1004-1476 (KESLQEIVLQ…QKGSQAILIH (473 aa)) constitute a Ketosynthase family 3 (KS3) domain. Active-site for beta-ketoacyl synthase activity residues include Cys-1190 and His-1442.

This sequence belongs to the thiolase-like superfamily. Fungal fatty acid synthetase subunit alpha family. The cofactor is pantetheine 4'-phosphate.

The enzyme catalyses acetyl-CoA + n malonyl-CoA + 2n NADPH + 4n H(+) = a long-chain-acyl-CoA + n CoA + n CO2 + 2n NADP(+).. It catalyses the reaction a fatty acyl-[ACP] + malonyl-[ACP] + H(+) = a 3-oxoacyl-[ACP] + holo-[ACP] + CO2. It carries out the reaction a (3R)-hydroxyacyl-[ACP] + NADP(+) = a 3-oxoacyl-[ACP] + NADPH + H(+). It functions in the pathway mycotoxin biosynthesis; HC-toxin biosynthesis. Fatty acid synthase alpha subunit, part of the diffuse TOX2 gene cluster that mediates the biosynthesis of the HC-toxin, cyclic tetrapeptide of structure cyclo(D-Pro-L-Ala-D-Ala-L-Aeo), where Aeo stands for 2-amino-9,10-epoxi-8-oxodecanoic acid. HC-toxin is a determinant of specificity and virulence in the interaction between the producing fungus and its host, maize. TOXH contribute to the synthesis of the decanoic backbone of 2-amino-9,10-epoxi-8-oxodecanoic acid, an essential precursor for the production of the major forms of HC-toxin by the non-ribosomal peptide synthetase HTS1. In Cochliobolus carbonum (Maize leaf spot fungus), this protein is Fatty acid synthase subunit alpha.